The sequence spans 66 residues: Beta-mammal toxin Css2 (66 aa).

In terms of domain architecture, LCN-type CS-alpha/beta spans 1–66 (KEGYLVSKST…VWPLPNKTCN (66 aa)). 4 disulfides stabilise this stretch: Cys-12-Cys-65, Cys-16-Cys-41, Cys-25-Cys-46, and Cys-29-Cys-48. An Asparagine amide modification is found at Asn-66.

This sequence belongs to the long (4 C-C) scorpion toxin superfamily. Sodium channel inhibitor family. Beta subfamily. C-terminal amidation increases its affinity for sodium channels. In terms of tissue distribution, expressed by the venom gland.

It is found in the secreted. Beta toxin that binds site-4 of sodium channels (Nav) and reduces peak current (observed on Nav1.6/SCN8A (IC(50)=307 nM)), shifts the voltage of activation toward more negative potentials (observed on Nav1.6, Nav1.1 (weak), Nav1.2 (weak), and Nav1.7 (weak)), and induces resurgent currents at negative voltages following brief and strong depolarizations (observed on Nav1.6, Nav1.1 (weak), and Nav1.7 (weak)). A reduction of peak current of Nav1.5/SCN7A has been observed in another study (IC(50)=35-40 nM). This toxin is only active on mammals. It has been shown to bind phospholipids. This Centruroides suffusus (Durango bark scorpion) protein is Beta-mammal toxin Css2.